The sequence spans 386 residues: CRISPR system endoribonuclease Csm6' (386 aa).

The interval 1–146 is CARF domain; it reads MRVLISAVGD…ASNENIGHDN (146 aa). The segment at 147 to 386 is HEPN domain; the sequence is DENIDELIEV…LNKILLTKLN (240 aa).

It belongs to the CRISPR-associated Csm6 family. Homodimer. The composite ssRNase active site is formed at the dimer interface.

Non-specific ssRNase activity is stimulated about 1000-fold by cyclic oligoadenylate (cOA), a second messenger produced by Cas10 of the ternary Csm effector complex in the presence of a cognate target RNA. Its function is as follows. CRISPR (clustered regularly interspaced short palindromic repeat) is an adaptive immune system that provides protection against mobile genetic elements (viruses, transposable elements and conjugative plasmids). CRISPR clusters contain spacers, sequences complementary to antecedent mobile elements, and target invading nucleic acids. CRISPR clusters are transcribed and processed into CRISPR RNA (crRNA). The type III-A Csm complex binds crRNA and acts as a crRNA-guided RNase, DNase and cyclic oligoadenylate synthase; binding of target RNA cognate to the crRNA is required for all activities. In a heterologous host this Csm effector complex restricts ssRNA phage MS2, suggesting it may target RNA viruses in vivo. This protein is not part of the Csm complex. Csm functions as a non-specific ssDNase. Base-pairing between crRNA and target RNA to form a ternary Csm complex activates a ssDNase activity; target RNA cleavage suppresses the ssDNase, a temporal control that prevents uncontrolled DNA degradation. Viral RNA transcripts probably tether the Csm complex to the viral genome, recruiting Cas10 ssDNA activity which is able to degrade DNA in the transcription bubble, spatially controlling the DNase activity. Functionally, a single-strand-specific endoribonuclease (ssRNase) that is approximately 1000-fold stimulated by cyclic oligoadenylate (cOA); although several species of cOA are synthesized by this organism only cyclic hexaadenylate (cA6) stimulates the ssRNase activity. Cleaves preferentially within GA or AA dinucleotides, although the presence of cA6 broadens the preference. This is CRISPR system endoribonuclease Csm6' from Streptococcus thermophilus.